Here is a 311-residue protein sequence, read N- to C-terminus: Pyrimidine-specific ribonucleoside hydrolase RihA (311 aa).

Residue His-240 is part of the active site.

This sequence belongs to the IUNH family. RihA subfamily.

Hydrolyzes with equal efficiency cytidine or uridine to ribose and cytosine or uracil, respectively. This Escherichia coli O139:H28 (strain E24377A / ETEC) protein is Pyrimidine-specific ribonucleoside hydrolase RihA.